The following is a 146-amino-acid chain: Basic phospholipase A2 beta-bungarotoxin A2 chain (146 aa).

The first 19 residues, 1–19 (MNPAHLLVLSAVCVSLLGA), serve as a signal peptide directing secretion. The propeptide occupies 20-27 (SNIPPQSL). 6 disulfides stabilise this stretch: C54–C145, C56–C72, C71–C126, C78–C119, C87–C112, and C105–C117. Residues Y55, G57, and G59 each coordinate Ca(2+). Residue H75 is part of the active site. D76 serves as a coordination point for Ca(2+). The active site involves D120.

Belongs to the phospholipase A2 family. Group I subfamily. D49 sub-subfamily. Heterodimer; disulfide-linked. The A chain has phospholipase A2 activity and the B chain shows homology with the basic protease inhibitors. Ca(2+) serves as cofactor. Expressed by the venom gland.

The protein localises to the secreted. The catalysed reaction is a 1,2-diacyl-sn-glycero-3-phosphocholine + H2O = a 1-acyl-sn-glycero-3-phosphocholine + a fatty acid + H(+). Snake venom phospholipase A2 (PLA2) that inhibits neuromuscular transmission by blocking acetylcholine release from the nerve termini. PLA2 catalyzes the calcium-dependent hydrolysis of the 2-acyl groups in 3-sn-phosphoglycerides. This Bungarus flaviceps flaviceps (Red-headed krait) protein is Basic phospholipase A2 beta-bungarotoxin A2 chain.